The primary structure comprises 565 residues: Adenine deaminase (565 aa).

This sequence belongs to the metallo-dependent hydrolases superfamily. Adenine deaminase family. The cofactor is Mn(2+).

The enzyme catalyses adenine + H2O + H(+) = hypoxanthine + NH4(+). The polypeptide is Adenine deaminase (Cereibacter sphaeroides (strain ATCC 17025 / ATH 2.4.3) (Rhodobacter sphaeroides)).